Consider the following 247-residue polypeptide: Cell division protein ZapD (247 aa).

Belongs to the ZapD family. Interacts with FtsZ.

It localises to the cytoplasm. Cell division factor that enhances FtsZ-ring assembly. Directly interacts with FtsZ and promotes bundling of FtsZ protofilaments, with a reduction in FtsZ GTPase activity. This Escherichia coli O7:K1 (strain IAI39 / ExPEC) protein is Cell division protein ZapD.